Consider the following 286-residue polypeptide: Pantothenate synthetase (286 aa).

Residue 30-37 (MGNLHSGH) coordinates ATP. His37 acts as the Proton donor in catalysis. Gln61 serves as a coordination point for (R)-pantoate. Beta-alanine is bound at residue Gln61. 149–152 (GQKD) contacts ATP. Gln155 lines the (R)-pantoate pocket. Residues Val178 and 186–189 (LSSR) contribute to the ATP site.

It belongs to the pantothenate synthetase family. Homodimer.

It is found in the cytoplasm. The enzyme catalyses (R)-pantoate + beta-alanine + ATP = (R)-pantothenate + AMP + diphosphate + H(+). It participates in cofactor biosynthesis; (R)-pantothenate biosynthesis; (R)-pantothenate from (R)-pantoate and beta-alanine: step 1/1. Catalyzes the condensation of pantoate with beta-alanine in an ATP-dependent reaction via a pantoyl-adenylate intermediate. In Pseudomonas fluorescens (strain ATCC BAA-477 / NRRL B-23932 / Pf-5), this protein is Pantothenate synthetase.